The sequence spans 513 residues: Abl interactor 2 (513 aa).

Phosphoserine is present on Ser40. In terms of domain architecture, t-SNARE coiled-coil homology spans 45–107 (RALEETKAYT…DIHKEKVARR (63 aa)). The interval 167–431 (KMGGLPRTTP…PPEDYEEEEA (265 aa)) is disordered. Residues 174–185 (TTPPTQKPPSPP) are compositionally biased toward pro residues. 2 positions are modified to phosphoserine: Ser183 and Ser227. Over residues 217–241 (PTRNMAPSQQSPVRTASVNQRNRTY) the composition is skewed to polar residues. The span at 242-272 (SSSGSSGGSHPSSRSSSRENSGSGSVGVPIA) shows a compositional bias: low complexity. Positions 273–282 (VPTPSPPSVF) are enriched in pro residues. Positions 283 to 325 (PAPAGSAGTPPLPATSASAPAPLVPATVPSSTAPNAAAGGAPN) are enriched in low complexity. Thr361 is subject to Phosphothreonine. Position 368 is a phosphoserine (Ser368). Residues 376-399 (SITSQTSLQNQMNGGPFYSQNPVS) are compositionally biased toward polar residues. The span at 400 to 409 (DTPPPPPPVE) shows a compositional bias: pro residues. Residues 451–510 (SYLEKVVAIYDYTKDKEDELSFQEGAIIYVIKKNDDGWYEGVMNGVTGLFPGNYVESIMH) form the SH3 domain.

This sequence belongs to the ABI family. Component of the WAVE complex composed of ABI2, CYFIP1 or CYFIP2, BRK1, NCKAP1 and WASF1/WAVE1. Within the complex, a heterodimer containing NCKAP1 and CYFIP1 interacts with a heterotrimer formed by WAVE1, ABI2 and BRK1. CYFIP2 binds to activated RAC1 which causes the complex to dissociate, releasing activated WASF1. Interacts (via SH3 domain) with ABL1 and ABL2. In terms of assembly, (Microbial infection) Interacts with human cytomegalovirus UL135. Phosphorylated by ABL1. In terms of tissue distribution, widely expressed. Abundant in testes, ovary, thymus, and colon, with lower but detectable levels in prostate, peripheral blood leukocytes, and spleen.

The protein localises to the cytoplasm. Its subcellular location is the nucleus. It is found in the cell projection. The protein resides in the lamellipodium. It localises to the filopodium. The protein localises to the cytoskeleton. Its subcellular location is the cell junction. It is found in the adherens junction. Functionally, regulator of actin cytoskeleton dynamics underlying cell motility and adhesion. Functions as a component of the WAVE complex, which activates actin nucleating machinery Arp2/3 to drive lamellipodia formation. Acts as a regulator and substrate of nonreceptor tyrosine kinases ABL1 and ABL2 involved in processes linked to cell growth and differentiation. Positively regulates ABL1-mediated phosphorylation of ENAH, which is required for proper polymerization of nucleated actin filaments at the leading edge. Contributes to the regulation of actin assembly at the tips of neuron projections. In particular, controls dendritic spine morphogenesis and may promote dendritic spine specification toward large mushroom-type spines known as repositories of memory in the brain. In hippocampal neurons, may mediate actin-dependent BDNF-NTRK2 early endocytic trafficking that triggers dendrite outgrowth. Participates in ocular lens morphogenesis, likely by regulating lamellipodia-driven adherens junction formation at the epithelial cell-secondary lens fiber interface. Also required for nascent adherens junction assembly in epithelial cells. This is Abl interactor 2 from Homo sapiens (Human).